We begin with the raw amino-acid sequence, 128 residues long: Small ribosomal subunit protein uS13 (128 aa).

A disordered region spans residues 97–128; sequence PVRGQRTRSNARTRKGPRPSRIKTKKKKEQTV. Residues 101-128 show a composition bias toward basic residues; that stretch reads QRTRSNARTRKGPRPSRIKTKKKKEQTV.

The protein belongs to the universal ribosomal protein uS13 family. Part of the 30S ribosomal subunit. Forms a loose heterodimer with protein S19. Forms two bridges to the 50S subunit in the 70S ribosome.

Functionally, located at the top of the head of the 30S subunit, it contacts several helices of the 16S rRNA. In the 70S ribosome it contacts the 23S rRNA (bridge B1a) and protein L5 of the 50S subunit (bridge B1b), connecting the 2 subunits; these bridges are implicated in subunit movement. Contacts the tRNAs in the A and P-sites. This chain is Small ribosomal subunit protein uS13, found in Pseudothermotoga lettingae (strain ATCC BAA-301 / DSM 14385 / NBRC 107922 / TMO) (Thermotoga lettingae).